The following is a 148-amino-acid chain: Large ribosomal subunit protein bL9 (148 aa).

Belongs to the bacterial ribosomal protein bL9 family.

Its function is as follows. Binds to the 23S rRNA. This chain is Large ribosomal subunit protein bL9, found in Lysinibacillus sphaericus (strain C3-41).